The sequence spans 224 residues: Cytochrome c biogenesis ATP-binding export protein CcmA (224 aa).

The 220-residue stretch at 1–220 folds into the ABC transporter domain; the sequence is MQNAEAAPAL…EYAHAEVVGA (220 aa). 40 to 47 lines the ATP pocket; it reads GANGSGKT.

Belongs to the ABC transporter superfamily. CcmA exporter (TC 3.A.1.107) family. The complex is composed of two ATP-binding proteins (CcmA) and two transmembrane proteins (CcmB).

The protein localises to the cell inner membrane. The catalysed reaction is heme b(in) + ATP + H2O = heme b(out) + ADP + phosphate + H(+). Part of the ABC transporter complex CcmAB involved in the biogenesis of c-type cytochromes; once thought to export heme, this seems not to be the case, but its exact role is uncertain. Responsible for energy coupling to the transport system. The chain is Cytochrome c biogenesis ATP-binding export protein CcmA from Bordetella bronchiseptica (strain ATCC BAA-588 / NCTC 13252 / RB50) (Alcaligenes bronchisepticus).